A 546-amino-acid chain; its full sequence is CTP synthase (546 aa).

An amidoligase domain region spans residues 1–269; that stretch reads MNPNTKIIFV…DAKLVELLNL (269 aa). Residue Ser-16 coordinates CTP. Residue Ser-16 participates in UTP binding. ATP-binding positions include 17–22 and Asp-74; that span reads SLGKGV. Mg(2+) is bound by residues Asp-74 and Glu-143. Residues 150 to 152, 190 to 195, and Lys-226 contribute to the CTP site; these read DIE and KTKPTQ. Residues 190–195 and Lys-226 contribute to the UTP site; that span reads KTKPTQ. The region spanning 294-546 is the Glutamine amidotransferase type-1 domain; it reads TIAMVGKYVS…IHAAVEKSNK (253 aa). An L-glutamine-binding site is contributed by Gly-356. Cys-383 serves as the catalytic Nucleophile; for glutamine hydrolysis. Residues 384-387, Glu-407, and Arg-474 each bind L-glutamine; that span reads LGMQ. Active-site residues include His-519 and Glu-521.

It belongs to the CTP synthase family. In terms of assembly, homotetramer.

The catalysed reaction is UTP + L-glutamine + ATP + H2O = CTP + L-glutamate + ADP + phosphate + 2 H(+). It catalyses the reaction L-glutamine + H2O = L-glutamate + NH4(+). The enzyme catalyses UTP + NH4(+) + ATP = CTP + ADP + phosphate + 2 H(+). The protein operates within pyrimidine metabolism; CTP biosynthesis via de novo pathway; CTP from UDP: step 2/2. Allosterically activated by GTP, when glutamine is the substrate; GTP has no effect on the reaction when ammonia is the substrate. The allosteric effector GTP functions by stabilizing the protein conformation that binds the tetrahedral intermediate(s) formed during glutamine hydrolysis. Inhibited by the product CTP, via allosteric rather than competitive inhibition. Functionally, catalyzes the ATP-dependent amination of UTP to CTP with either L-glutamine or ammonia as the source of nitrogen. Regulates intracellular CTP levels through interactions with the four ribonucleotide triphosphates. The polypeptide is CTP synthase (Francisella philomiragia subsp. philomiragia (strain ATCC 25017 / CCUG 19701 / FSC 153 / O#319-036)).